The chain runs to 225 residues: Glutathione S-transferase Mu 3 (225 aa).

The region spanning 5 to 92 (SSMVLGYWDI…YIARKHNMCG (88 aa)) is the GST N-terminal domain. Glutathione-binding positions include 11 to 12 (YW), 50 to 54 (WLDVK), and 63 to 64 (NL). Residue K54 forms a Glycyl lysine isopeptide (Lys-Gly) (interchain with G-Cter in SUMO2) linkage. K73 participates in a covalent cross-link: Glycyl lysine isopeptide (Lys-Gly) (interchain with G-Cter in SUMO2). Glutathione is bound at residue 76–77 (QS). The GST C-terminal domain maps to 94-212 (TEEEKIRVDI…QSDQFCKMPI (119 aa)). Position 120 (Y120) interacts with substrate.

The protein belongs to the GST superfamily. Mu family. As to quaternary structure, homodimer. Post-translationally, the N-terminus is blocked. In terms of tissue distribution, testis and brain.

It localises to the cytoplasm. The catalysed reaction is RX + glutathione = an S-substituted glutathione + a halide anion + H(+). Functionally, conjugation of reduced glutathione to a wide number of exogenous and endogenous hydrophobic electrophiles. May govern uptake and detoxification of both endogenous compounds and xenobiotics at the testis and brain blood barriers. This is Glutathione S-transferase Mu 3 (GSTM3) from Homo sapiens (Human).